The primary structure comprises 234 residues: Leucyl/phenylalanyl-tRNA--protein transferase (234 aa).

This sequence belongs to the L/F-transferase family.

The protein localises to the cytoplasm. It carries out the reaction N-terminal L-lysyl-[protein] + L-leucyl-tRNA(Leu) = N-terminal L-leucyl-L-lysyl-[protein] + tRNA(Leu) + H(+). It catalyses the reaction N-terminal L-arginyl-[protein] + L-leucyl-tRNA(Leu) = N-terminal L-leucyl-L-arginyl-[protein] + tRNA(Leu) + H(+). The catalysed reaction is L-phenylalanyl-tRNA(Phe) + an N-terminal L-alpha-aminoacyl-[protein] = an N-terminal L-phenylalanyl-L-alpha-aminoacyl-[protein] + tRNA(Phe). Functionally, functions in the N-end rule pathway of protein degradation where it conjugates Leu, Phe and, less efficiently, Met from aminoacyl-tRNAs to the N-termini of proteins containing an N-terminal arginine or lysine. This chain is Leucyl/phenylalanyl-tRNA--protein transferase, found in Shigella dysenteriae serotype 1 (strain Sd197).